A 300-amino-acid chain; its full sequence is MQFHSSSALITPFKKDLSVDEAAYESLIKRQILQGMDACVPVGTTGESATLTHKEHMRCIEIAIETCKNTKTPSNSCMKVLAGVGSNATSESLSLAKFAQKIGADAILCVSPYYNRPTQQGLFEHYKTIAQSVEIPVMLYDVPSRTGVSIEVPTALKLFREVPNIKAIKEASGSLKRVTELHYYEKDFKIFSGEDSLNHSIMFSGGCGVISVTGNLMPNLISQMVNCALKQKYQQALEIQNKLFHLHQALFVETNPIPIKMAMHLAGLIENPSYRLPLVAPSKETIQLLEKTLQQYEVIA.

Threonine 45 provides a ligand contact to pyruvate. The Proton donor/acceptor role is filled by tyrosine 140. The active-site Schiff-base intermediate with substrate is lysine 169. Isoleucine 210 lines the pyruvate pocket.

The protein belongs to the DapA family. In terms of assembly, homotetramer; dimer of dimers.

Its subcellular location is the cytoplasm. It catalyses the reaction L-aspartate 4-semialdehyde + pyruvate = (2S,4S)-4-hydroxy-2,3,4,5-tetrahydrodipicolinate + H2O + H(+). It functions in the pathway amino-acid biosynthesis; L-lysine biosynthesis via DAP pathway; (S)-tetrahydrodipicolinate from L-aspartate: step 3/4. Catalyzes the condensation of (S)-aspartate-beta-semialdehyde [(S)-ASA] and pyruvate to 4-hydroxy-tetrahydrodipicolinate (HTPA). In Helicobacter pylori (strain HPAG1), this protein is 4-hydroxy-tetrahydrodipicolinate synthase.